Reading from the N-terminus, the 238-residue chain is Large ribosomal subunit protein uL2 (238 aa).

The segment at 201-238 (PFGGGGRQHPGRPKTVSRNTPPGRKVGSIAARRTGVGH) is disordered.

This sequence belongs to the universal ribosomal protein uL2 family. In terms of assembly, part of the 50S ribosomal subunit. Forms a bridge to the 30S subunit in the 70S ribosome.

Its function is as follows. One of the primary rRNA binding proteins. Required for association of the 30S and 50S subunits to form the 70S ribosome, for tRNA binding and peptide bond formation. It has been suggested to have peptidyltransferase activity; this is somewhat controversial. Makes several contacts with the 16S rRNA in the 70S ribosome. The protein is Large ribosomal subunit protein uL2 of Methanocella arvoryzae (strain DSM 22066 / NBRC 105507 / MRE50).